Here is a 693-residue protein sequence, read N- to C-terminus: Polyribonucleotide nucleotidyltransferase (693 aa).

Residues Asp-489 and Asp-495 each coordinate Mg(2+). In terms of domain architecture, KH spans 556 to 615 (PQIHVMNINPAKIKDVVGRGGATVKGIVEKTGAQIDTSDSGEVKVFAKDKKSMDMAVAMI). The S1 motif domain occupies 625–693 (GQVYKGKIVK…GRVKLSLVAR (69 aa)).

The protein belongs to the polyribonucleotide nucleotidyltransferase family. In terms of assembly, component of the RNA degradosome, which is a multiprotein complex involved in RNA processing and mRNA degradation. It depends on Mg(2+) as a cofactor.

The protein localises to the cytoplasm. The catalysed reaction is RNA(n+1) + phosphate = RNA(n) + a ribonucleoside 5'-diphosphate. Involved in mRNA degradation. Catalyzes the phosphorolysis of single-stranded polyribonucleotides processively in the 3'- to 5'-direction. This chain is Polyribonucleotide nucleotidyltransferase, found in Francisella tularensis subsp. holarctica (strain FTNF002-00 / FTA).